The sequence spans 669 residues: Protein real-time (669 aa).

Positions 3 to 175 (QKFQSPVRVY…FINQLEQEGV (173 aa)) constitute a PRELI/MSF1 domain. One can recognise a CRAL-TRIO domain in the interval 284–460 (EPAVVVEHFP…FLGGPCKTMI (177 aa)). A GOLD domain is found at 522 to 641 (HQNLYKSVDL…QLNLFYEVLS (120 aa)).

The protein localises to the mitochondrion. The polypeptide is Protein real-time (Drosophila pseudoobscura pseudoobscura (Fruit fly)).